We begin with the raw amino-acid sequence, 413 residues long: Wilms tumor protein homolog (413 aa).

Residues lysine 56 and lysine 159 each participate in a glycyl lysine isopeptide (Lys-Gly) (interchain with G-Cter in SUMO) cross-link. Positions 218 to 226 (MTWNQMNLG) match the 9aaTAD motif. 4 C2H2-type zinc fingers span residues 290–314 (FMCA…SRKH), 320–344 (YQCD…QRRH), 350–372 (FQCK…TRTH), and 378–402 (FSCR…HNMH). 2 important for interaction with target DNA regions span residues 334-348 (SDQL…TGIK) and 360-368 (SRSDHLKTH).

The protein belongs to the EGR C2H2-type zinc-finger protein family.

It is found in the nucleus. Its subcellular location is the cytoplasm. The protein resides in the nucleus speckle. Functionally, transcription factor required for development of the vascular component of the pronephric kidney, the glomus; may repress tubule-specific gene expression in the portion of the pronephros fated to form the glomus. Recognizes and binds to the DNA sequence 5'-GCG(T/G)GGGCG-3'. Inhibits Wnt-signaling during embryonic development. This Xenopus tropicalis (Western clawed frog) protein is Wilms tumor protein homolog (wt1).